A 371-amino-acid chain; its full sequence is Riboflavin biosynthesis protein RibD (371 aa).

The interval 1-150 (MEVSSEQQLF…QPYLHQRETG (150 aa)) is deaminase. The 123-residue stretch at 6–128 (EQQLFFMREA…RLKEAGISVY (123 aa)) folds into the CMP/dCMP-type deaminase domain. His-55 contributes to the Zn(2+) binding site. The active-site Proton donor is Glu-57. Zn(2+)-binding residues include Cys-80 and Cys-89. Residues 151 to 371 (LPWVVMKTAA…CFECVGREDG (221 aa)) are reductase. Ala-159 is an NADP(+) binding site. A substrate-binding site is contributed by Ser-173. Trp-175 lines the NADP(+) pocket. Arg-189 is a substrate binding site. Positions 201 and 205 each coordinate NADP(+). The substrate site is built by Leu-209 and Arg-212. Residue Ser-230 coordinates NADP(+). Glu-299 is a substrate binding site. Residue 301 to 307 (GARLHSA) participates in NADP(+) binding.

The protein in the N-terminal section; belongs to the cytidine and deoxycytidylate deaminase family. It in the C-terminal section; belongs to the HTP reductase family. Zn(2+) serves as cofactor.

It catalyses the reaction 2,5-diamino-6-hydroxy-4-(5-phosphoribosylamino)-pyrimidine + H2O + H(+) = 5-amino-6-(5-phospho-D-ribosylamino)uracil + NH4(+). The catalysed reaction is 5-amino-6-(5-phospho-D-ribitylamino)uracil + NADP(+) = 5-amino-6-(5-phospho-D-ribosylamino)uracil + NADPH + H(+). It functions in the pathway cofactor biosynthesis; riboflavin biosynthesis; 5-amino-6-(D-ribitylamino)uracil from GTP: step 2/4. The protein operates within cofactor biosynthesis; riboflavin biosynthesis; 5-amino-6-(D-ribitylamino)uracil from GTP: step 3/4. Its function is as follows. Converts 2,5-diamino-6-(ribosylamino)-4(3h)-pyrimidinone 5'-phosphate into 5-amino-6-(ribosylamino)-2,4(1h,3h)-pyrimidinedione 5'-phosphate. This chain is Riboflavin biosynthesis protein RibD (ribD), found in Chlamydia muridarum (strain MoPn / Nigg).